The following is a 92-amino-acid chain: MATTYEEFSAKLDRLDEEFNRKMQEQNAKFFADKPDESTLSPEMKEHYEKFERMIREHTEKFNKKMHEHSEHFKQKFAELLEQQKAAQYPSK.

Belongs to the KMP-11 family. In terms of assembly, monomer.

The protein localises to the cytoplasm. Its subcellular location is the cytoskeleton. It is found in the cell projection. It localises to the cilium. The protein resides in the flagellum. Its function is as follows. May be involved in the regulation of the cytoskeleton through interaction with the subpellicular microtubules. May be involved in parasite mobility and attachment to the surface of the host cell. Behaves as a strong immunogen during infection. In Leishmania infantum, this protein is Kinetoplastid membrane protein 11C (KMP-11C).